Consider the following 249-residue polypeptide: Methylthioribulose-1-phosphate dehydratase (249 aa).

The Zn(2+) site is built by His103 and His105.

Belongs to the aldolase class II family. MtnB subfamily. Zn(2+) serves as cofactor.

The catalysed reaction is 5-(methylsulfanyl)-D-ribulose 1-phosphate = 5-methylsulfanyl-2,3-dioxopentyl phosphate + H2O. The protein operates within amino-acid biosynthesis; L-methionine biosynthesis via salvage pathway; L-methionine from S-methyl-5-thio-alpha-D-ribose 1-phosphate: step 2/6. Functionally, catalyzes the dehydration of methylthioribulose-1-phosphate (MTRu-1-P) into 2,3-diketo-5-methylthiopentyl-1-phosphate (DK-MTP-1-P). This is Methylthioribulose-1-phosphate dehydratase from Leptospira interrogans serogroup Icterohaemorrhagiae serovar copenhageni (strain Fiocruz L1-130).